Consider the following 1131-residue polypeptide: Major DNA-binding protein (1131 aa).

The Required for filament formation motif lies at 790-791 (FW). The required for nuclear localization stretch occupies residues 1112 to 1131 (LKCEETEHENEEPSLKKARL).

This sequence belongs to the herpesviridae major DNA-binding protein family. As to quaternary structure, homooligomers. Forms double-helical filaments necessary for the formation of replication compartments within the host nucleus. Interacts with the origin-binding protein. Interacts with the helicase primase complex; this interaction stimulates primer synthesis activity of the helicase-primase complex. Interacts with the DNA polymerase. Interacts with the alkaline exonuclease; this interaction increases its nuclease processivity.

The protein localises to the host nucleus. Functionally, single-stranded DNA-binding protein required for DNA replication. Plays several crucial roles in viral infection. Participates in the opening of the viral DNA origin to initiate replication by interacting with the origin-binding protein. May disrupt loops, hairpins and other secondary structures present on ssDNA to reduce and eliminate pausing of viral DNA polymerase at specific sites during elongation. Promotes viral DNA recombination by performing strand-transfer, characterized by the ability to transfer a DNA strand from a linear duplex to a complementary single-stranded DNA circle. Can also catalyze the renaturation of complementary single strands. Additionally, reorganizes the host cell nucleus, leading to the formation of prereplicative sites and replication compartments. This process is driven by the protein which can form double-helical filaments in the absence of DNA. The protein is Major DNA-binding protein of Human herpesvirus 7 (strain JI) (HHV-7).